A 93-amino-acid polypeptide reads, in one-letter code: Sec-independent protein translocase protein TatA (93 aa).

A helical membrane pass occupies residues 1-21 (MGNVFSGWHLLVILLVIVLLF). The segment at 49 to 93 (DITRSQDGHPDSQGNFAESASSVPFVKSEKQSEKRASVTEAKKSK) is disordered. The segment covering 60–70 (SQGNFAESASS) has biased composition (polar residues). The span at 75–93 (KSEKQSEKRASVTEAKKSK) shows a compositional bias: basic and acidic residues.

The protein belongs to the TatA/E family. As to quaternary structure, the Tat system comprises two distinct complexes: a TatABC complex, containing multiple copies of TatA, TatB and TatC subunits, and a separate TatA complex, containing only TatA subunits. Substrates initially bind to the TatABC complex, which probably triggers association of the separate TatA complex to form the active translocon.

Its subcellular location is the cell membrane. Its function is as follows. Part of the twin-arginine translocation (Tat) system that transports large folded proteins containing a characteristic twin-arginine motif in their signal peptide across membranes. TatA could form the protein-conducting channel of the Tat system. This Tropheryma whipplei (strain TW08/27) (Whipple's bacillus) protein is Sec-independent protein translocase protein TatA.